A 705-amino-acid chain; its full sequence is Ribonuclease R (705 aa).

The 328-residue stretch at 240–567 (RRDLREQLCF…VHRLLKKALR (328 aa)) folds into the RNB domain. Residues 615–696 (GEEFIGIITG…ERARVEFELI (82 aa)) enclose the S1 motif domain.

This sequence belongs to the RNR ribonuclease family. RNase R subfamily.

It localises to the cytoplasm. It carries out the reaction Exonucleolytic cleavage in the 3'- to 5'-direction to yield nucleoside 5'-phosphates.. In terms of biological role, 3'-5' exoribonuclease that releases 5'-nucleoside monophosphates and is involved in maturation of structured RNAs. In Aquifex aeolicus (strain VF5), this protein is Ribonuclease R.